Reading from the N-terminus, the 432-residue chain is Bouquet formation protein 4 (432 aa).

Residues 1–21 are disordered; it reads MTENEKSRSLPAERNPLYKDD. Residues 38-147 enclose the HTH APSES-type domain; the sequence is EFPDGPATFV…SSTPSTYATP (110 aa). Residues 73-94 constitute a DNA-binding region (H-T-H motif); sequence ATSMFRSAFPKATQEEEDLEMR. 2 stretches are compositionally biased toward low complexity: residues 139 to 152 and 163 to 172; these read STPS…RPTA and ESSTSATTTS. 2 disordered regions span residues 139 to 283 and 364 to 384; these read STPS…GKIR and KSSI…FEEN. Residues 180-228 show a composition bias toward basic and acidic residues; sequence RLAEHLENSKKTILQHDNKEEDKEIHSEENETKDEIKSEKKEPEIKKQE. The segment covering 229–241 has biased composition (polar residues); the sequence is GGSSTEKVGQPSS.

In terms of assembly, interacts with rap1.

It is found in the cytoplasm. It localises to the nucleus. The protein localises to the nucleus inner membrane. In terms of biological role, connects telomeres to the nuclear envelop (NE) during both vegetative growth and meiosis. This connection ensures clustering of telomeres to the spindle pole body (SPB) when cells enter meiotic prophase. The polypeptide is Bouquet formation protein 4 (bqt4) (Schizosaccharomyces pombe (strain 972 / ATCC 24843) (Fission yeast)).